Here is a 439-residue protein sequence, read N- to C-terminus: MLRIVDVTSETTDDLRCAVPRADFDVDAAMAAVIPVCSAVRDRGVEALREYSEKFDHVVPEHLRVPVEALATAAANLDGTLRRAFSESIRRRRQVCQEAEVETSSQPVEVAGGARVSQRIVPVGRVGLYVPGGFAPLASSVIMNVVPAQEAGVSSIAVASPPQAEFGGLPHPSILALCHLLGVNEVYAVGGAQAIAMFAYGVEGSDEADSCPRVDMVTGPGNIYVVAAKRCLRGTVGIDSEAGPTEIAILADETADPRHIAADLMSQAEHDTLAAAVLVTDSTTLAEAVQRELAPMVSATLHSERIRTSLTSKQSAIVMVRDIDQGLEVVNAYAAEHLEIQTADAAAVAARVWNAGAIFVGPWAPVSLGDYSAGSTHVLPTAGAACHSSGLSVRSFMRAVHVIDYTEDALLELADSVEAFALAENLPGHANAITVRRSR.

Positions 129, 193, and 222 each coordinate NAD(+). Substrate is bound by residues Thr-245, Gln-267, and His-270. Zn(2+) contacts are provided by Gln-267 and His-270. Active-site proton acceptor residues include Glu-336 and His-337. Residues His-337, Asp-370, Glu-424, and His-429 each contribute to the substrate site. Residue Asp-370 coordinates Zn(2+). Residue His-429 participates in Zn(2+) binding.

It belongs to the histidinol dehydrogenase family. Zn(2+) is required as a cofactor.

The enzyme catalyses L-histidinol + 2 NAD(+) + H2O = L-histidine + 2 NADH + 3 H(+). Its pathway is amino-acid biosynthesis; L-histidine biosynthesis; L-histidine from 5-phospho-alpha-D-ribose 1-diphosphate: step 9/9. In terms of biological role, catalyzes the sequential NAD-dependent oxidations of L-histidinol to L-histidinaldehyde and then to L-histidine. The polypeptide is Histidinol dehydrogenase (Cutibacterium acnes (strain DSM 16379 / KPA171202) (Propionibacterium acnes)).